A 909-amino-acid polypeptide reads, in one-letter code: UPF0182 protein H16_A1615 (909 aa).

Helical transmembrane passes span 16 to 36, 58 to 78, 114 to 134, 169 to 189, 205 to 225, 246 to 266, and 281 to 301; these read TWVVAVIVALIAVSRVTGLVV, ALLFLAVFAVSAGALWLSGWL, VAVLVGLLMAVGELSSWAIAL, WLLLLLGCSAVLAGVVYGLRG, ATHGSALLGLFFALQAWSYWL, VHVGLPVLWLQVGLAAAAAAA, and AAALLVVGSAIVLGTIWPALF.

Belongs to the UPF0182 family.

The protein resides in the cell membrane. This Cupriavidus necator (strain ATCC 17699 / DSM 428 / KCTC 22496 / NCIMB 10442 / H16 / Stanier 337) (Ralstonia eutropha) protein is UPF0182 protein H16_A1615.